Here is a 359-residue protein sequence, read N- to C-terminus: Glyceraldehyde-3-phosphate dehydrogenase, glycosomal (359 aa).

NAD(+) contacts are provided by residues 12–13 (RI), aspartate 38, glutamine 91, and serine 134. Residues 165–167 (SCT), threonine 197, 226–227 (TG), and arginine 249 contribute to the D-glyceraldehyde 3-phosphate site. The active-site Nucleophile is cysteine 166. Asparagine 335 lines the NAD(+) pocket. The Microbody targeting signal signature appears at 357–359 (ARL).

The protein belongs to the glyceraldehyde-3-phosphate dehydrogenase family. As to quaternary structure, homotetramer.

The protein localises to the glycosome. It carries out the reaction D-glyceraldehyde 3-phosphate + phosphate + NAD(+) = (2R)-3-phospho-glyceroyl phosphate + NADH + H(+). The protein operates within carbohydrate degradation; glycolysis; pyruvate from D-glyceraldehyde 3-phosphate: step 1/5. The polypeptide is Glyceraldehyde-3-phosphate dehydrogenase, glycosomal (Trypanosoma cruzi).